The chain runs to 811 residues: Ribonucleoside-diphosphate reductase large chain (811 aa).

Positions 1–92 (MFVYKRDGRQ…VSNLHKQTEK (92 aa)) constitute an ATP-cone domain. ATP is bound by residues 5–6 (KR), 11–17 (EKVAFDK), Thr53, and Asp57. GDP is bound by residues Ser202 and Ser217. The cysteines at positions 218 and 444 are disulfide-linked. DTTP is bound by residues 226-228 (DSI), Lys243, Arg256, and 263-264 (AG). Asn427 is a binding site for GDP. Asn427 acts as the Proton acceptor in catalysis. Cys429 serves as the catalytic Cysteine radical intermediate. Residues Glu431 and 603-606 (TAST) contribute to the GDP site. Catalysis depends on Glu431, which acts as the Proton acceptor.

This sequence belongs to the ribonucleoside diphosphate reductase large chain family. As to quaternary structure, heterodimer of a large and a small subunit. Interacts with SPD1.

The enzyme catalyses a 2'-deoxyribonucleoside 5'-diphosphate + [thioredoxin]-disulfide + H2O = a ribonucleoside 5'-diphosphate + [thioredoxin]-dithiol. With respect to regulation, under complex allosteric control mediated by deoxynucleoside triphosphates and ATP binding to separate specificity and activation sites on the large subunit. The type of nucleotide bound at the specificity site determines substrate preference. It seems probable that ATP makes the enzyme reduce CDP and UDP, dGTP favors ADP reduction and dTTP favors GDP reduction. Stimulated by ATP and inhibited by dATP binding to the activity site. In terms of biological role, provides the precursors necessary for DNA synthesis. Catalyzes the biosynthesis of deoxyribonucleotides from the corresponding ribonucleotides. The sequence is that of Ribonucleoside-diphosphate reductase large chain (cdc22) from Schizosaccharomyces pombe (strain 972 / ATCC 24843) (Fission yeast).